We begin with the raw amino-acid sequence, 446 residues long: Xanthone prenyltransferase A (446 aa).

Dimethylallyl diphosphate contacts are provided by Arg113, Lys199, Tyr201, Arg263, Lys265, Tyr267, Tyr369, and Tyr440.

It belongs to the tryptophan dimethylallyltransferase family.

It functions in the pathway secondary metabolite biosynthesis. Its function is as follows. Xanthone prenyltransferase involved in the conversion of monodictyphenone to the prenyl xanthones such as emericellin, shamixanthone and epishamixanthone. Monodictyphenone is first converted to variecoxanthone A via a paeciloxanthone intermediate by the consecutive actions of the FAD-dependent monooxygenase mdpD and the xanthone prenyltransferase xptB. XptB catalyzes regular O-prenylation at the hydroxy group of C-7 of the xanthone ring. Variecoxanthone A is further prenylated to emericellin by xptA before being reduced to shamixanthone and epishamixanthone by the dehydrogenase xptC. The protein is Xanthone prenyltransferase A of Emericella nidulans (strain FGSC A4 / ATCC 38163 / CBS 112.46 / NRRL 194 / M139) (Aspergillus nidulans).